Here is a 220-residue protein sequence, read N- to C-terminus: GTP cyclohydrolase 1 (220 aa).

The Zn(2+) site is built by Cys109, His112, and Cys180.

Belongs to the GTP cyclohydrolase I family. In terms of assembly, homomer.

It catalyses the reaction GTP + H2O = 7,8-dihydroneopterin 3'-triphosphate + formate + H(+). It functions in the pathway cofactor biosynthesis; 7,8-dihydroneopterin triphosphate biosynthesis; 7,8-dihydroneopterin triphosphate from GTP: step 1/1. In Edwardsiella ictaluri (strain 93-146), this protein is GTP cyclohydrolase 1.